We begin with the raw amino-acid sequence, 433 residues long: Glutamate-1-semialdehyde 2,1-aminomutase (433 aa).

Lysine 271 is modified (N6-(pyridoxal phosphate)lysine).

Belongs to the class-III pyridoxal-phosphate-dependent aminotransferase family. HemL subfamily. Homodimer. Requires pyridoxal 5'-phosphate as cofactor.

The protein resides in the cytoplasm. The catalysed reaction is (S)-4-amino-5-oxopentanoate = 5-aminolevulinate. It participates in porphyrin-containing compound metabolism; protoporphyrin-IX biosynthesis; 5-aminolevulinate from L-glutamyl-tRNA(Glu): step 2/2. It functions in the pathway porphyrin-containing compound metabolism; chlorophyll biosynthesis. The polypeptide is Glutamate-1-semialdehyde 2,1-aminomutase (Prochlorococcus marinus (strain SARG / CCMP1375 / SS120)).